The following is a 221-amino-acid chain: Max dimerization protein 1 (221 aa).

A Nuclear localization signal motif is present at residues 21 to 49; the sequence is RREREAEHGYASMLPYNSKERDGLKRKSK. 2 disordered regions span residues 29 to 67 and 178 to 221; these read GYASMLPYNSKERDGLKRKSKSKKSSSSRSTHNEMEKNR and SSSS…SIAL. Residues 55-107 enclose the bHLH domain; it reads SSRSTHNEMEKNRRAHLRLCLEKLKMLVPLGPESNRHTTLSLLMRAKLHIKKL. Residues 193 to 221 show a composition bias toward polar residues; that stretch reads MQSICSDEGYSSSGLKSIGLQNNPKSIAL.

Heterodimer with MAX; the interaction is required for DNA-binding. DNA binding requires dimerization with another bHLH protein; does not form homodimers, and does not bind to DNA in the absence of MAX in vitro. Expressed primarily in cells that have undergone terminal differentiation including notochord, floor plate and cement gland.

The protein localises to the nucleus. Functionally, component of a transcriptional repressor complex together with MAX. In complex with MAX binds to the core DNA sequence 5'-CAC[GA]TG-3'. Antagonizes MYC transcriptional activity by competing with MYC for MAX binding. Binds to the TERT promoter and represses telomerase expression, possibly by interfering with MYC binding. The chain is Max dimerization protein 1 (mxd1) from Xenopus laevis (African clawed frog).